Consider the following 223-residue polypeptide: HTH-type transcriptional dual regulator CecR (223 aa).

Residues 11 to 70 (EQAKKQLIAAALAQFGEYGMNATTREIAAQAGQNIAAITYYFGSKEDLYLACAQWIADFI) enclose the HTH tetR-type domain. Positions 33–52 (TTREIAAQAGQNIAAITYYF) form a DNA-binding region, H-T-H motif.

The protein resides in the cytoplasm. Functionally, regulates transcription of the cecR-ybhGFSR operon and the rhlE gene, which altogether are involved in the control of sensitivity to cefoperazone and chloramphenicol. Represses the cecR-ybhGFSR operon and activates the rhlE operon. Acts by binding to a palindromic sequence within the intergenic spacer located between these two divergently transcribed operons. The protein is HTH-type transcriptional dual regulator CecR of Shigella flexneri.